Reading from the N-terminus, the 420-residue chain is Shaggy-related protein kinase delta (420 aa).

The disordered stretch occupies residues 1-61; that stretch reads MESHLGNGVG…DIIDGVGAEP (61 aa). Residues 10–26 show a composition bias toward polar residues; the sequence is GSSRSAKNTKNTSSSVD. Basic and acidic residues predominate over residues 28–41; that stretch reads LSRDMLEMKIRDKT. Residues 42-53 are compositionally biased toward acidic residues; that stretch reads EADEERDSEPDI. The region spanning 82-366 is the Protein kinase domain; sequence YIAEHVVGTG…AVEACIHPFF (285 aa). ATP is bound by residues 88 to 96 and Lys-111; that span reads VGTGSFGMV. Asp-207 (proton acceptor) is an active-site residue. Tyr-242 carries the post-translational modification Phosphotyrosine.

The protein belongs to the protein kinase superfamily. CMGC Ser/Thr protein kinase family. GSK-3 subfamily. Post-translationally, autophosphorylated mainly on threonine and serine residues.

It catalyses the reaction L-seryl-[protein] + ATP = O-phospho-L-seryl-[protein] + ADP + H(+). The catalysed reaction is L-threonyl-[protein] + ATP = O-phospho-L-threonyl-[protein] + ADP + H(+). Functionally, may mediate extracellular signals to regulate transcription in differentiating cells. This is Shaggy-related protein kinase delta (ASK4) from Arabidopsis thaliana (Mouse-ear cress).